Here is a 298-residue protein sequence, read N- to C-terminus: U1 small nuclear ribonucleoprotein A (298 aa).

RRM domains are found at residues 2-113 (SALY…KART) and 227-298 (KVLL…GFAK).

The protein belongs to the RRM U1 A/B'' family. Component of the spliceosome where it is associated with snRNP U1.

The protein resides in the nucleus. Functionally, involved in nuclear mRNA splicing. The principal role of the U1A is to help fold or maintain U1 RNA in an active configuration. It is the first snRNP to interact with pre-mRNA. This interaction is required for the subsequent binding of U2 snRNP and the U4/U6/U5 tri-snRNP. The protein is U1 small nuclear ribonucleoprotein A (MUD1) of Saccharomyces cerevisiae (strain ATCC 204508 / S288c) (Baker's yeast).